The primary structure comprises 108 residues: FK506-binding protein 1A (108 aa).

The segment at 1–20 (MGVEVQRISPGDGKNFPKPG) is disordered. Residues 20–108 (GDTVSIHYTG…TFEVELLKIN (89 aa)) form the PPIase FKBP-type domain.

The protein belongs to the FKBP-type PPIase family. FKBP1 subfamily.

It localises to the cytoplasm. The enzyme catalyses [protein]-peptidylproline (omega=180) = [protein]-peptidylproline (omega=0). With respect to regulation, inhibited by both FK506 and rapamycin. In terms of biological role, PPIases accelerate the folding of proteins. It catalyzes the cis-trans isomerization of proline imidic peptide bonds in oligopeptides. The protein is FK506-binding protein 1A (fprA) of Emericella nidulans (strain FGSC A4 / ATCC 38163 / CBS 112.46 / NRRL 194 / M139) (Aspergillus nidulans).